Here is a 99-residue protein sequence, read N- to C-terminus: uncharacterized protein (99 aa).

Residues 43-95 are a coiled coil; sequence ENEEIYADQVRRIKLRLRELRETYATSEDNWRELMDNLEELRDQIERLAIRGG.

This is an uncharacterized protein from Archaeoglobus fulgidus (strain ATCC 49558 / DSM 4304 / JCM 9628 / NBRC 100126 / VC-16).